Reading from the N-terminus, the 130-residue chain is Prefoldin subunit alpha (130 aa).

Belongs to the prefoldin subunit alpha family. In terms of assembly, heterohexamer of two alpha and four beta subunits.

Its subcellular location is the cytoplasm. Its function is as follows. Molecular chaperone capable of stabilizing a range of proteins. Seems to fulfill an ATP-independent, HSP70-like function in archaeal de novo protein folding. In Thermoplasma acidophilum (strain ATCC 25905 / DSM 1728 / JCM 9062 / NBRC 15155 / AMRC-C165), this protein is Prefoldin subunit alpha (pfdA).